The sequence spans 215 residues: Fibroblast growth factor 10 (215 aa).

The signal sequence occupies residues 1 to 36 (MWKWILTHCASAFPHLPGCCCCFLLLFLVSSVPVTC). The segment at 49–73 (TNSSSSSSSSSSSSSFSSPSSAGRH) is disordered. A glycan (N-linked (GlcNAc...) asparagine) is linked at N50. The segment covering 51–69 (SSSSSSSSSSSSSFSSPSS) has biased composition (low complexity). N203 carries N-linked (GlcNAc...) asparagine glycosylation.

It belongs to the heparin-binding growth factors family. Interacts with FGFR1 and FGFR2. Interacts with FGFBP1. In terms of tissue distribution, preferentially expressed in the lung in adults.

Its subcellular location is the secreted. Its function is as follows. Plays an important role in the regulation of embryonic development, cell proliferation and cell differentiation. Required for normal branching morphogenesis. May play a role in wound healing. The protein is Fibroblast growth factor 10 (Fgf10) of Rattus norvegicus (Rat).